The primary structure comprises 239 residues: Ribosomal RNA small subunit methyltransferase G (239 aa).

Residues Gly-75, Leu-80, 126–127, and Arg-142 each bind S-adenosyl-L-methionine; that span reads AE.

It belongs to the methyltransferase superfamily. RNA methyltransferase RsmG family.

The protein localises to the cytoplasm. Functionally, specifically methylates the N7 position of guanine in position 518 of 16S rRNA. This chain is Ribosomal RNA small subunit methyltransferase G, found in Streptomyces coelicolor (strain ATCC BAA-471 / A3(2) / M145).